Consider the following 448-residue polypeptide: Probable glycine dehydrogenase (decarboxylating) subunit 1 (448 aa).

It belongs to the GcvP family. N-terminal subunit subfamily. The glycine cleavage system is composed of four proteins: P, T, L and H. In this organism, the P 'protein' is a heterodimer of two subunits.

It catalyses the reaction N(6)-[(R)-lipoyl]-L-lysyl-[glycine-cleavage complex H protein] + glycine + H(+) = N(6)-[(R)-S(8)-aminomethyldihydrolipoyl]-L-lysyl-[glycine-cleavage complex H protein] + CO2. Functionally, the glycine cleavage system catalyzes the degradation of glycine. The P protein binds the alpha-amino group of glycine through its pyridoxal phosphate cofactor; CO(2) is released and the remaining methylamine moiety is then transferred to the lipoamide cofactor of the H protein. This Bacillus subtilis (strain 168) protein is Probable glycine dehydrogenase (decarboxylating) subunit 1 (gcvPA).